The chain runs to 179 residues: ATP synthase subunit b (179 aa).

A helical membrane pass occupies residues 23–43 (IFWLIITFGILYVVLSKLILP).

The protein belongs to the ATPase B chain family. F-type ATPases have 2 components, F(1) - the catalytic core - and F(0) - the membrane proton channel. F(1) has five subunits: alpha(3), beta(3), gamma(1), delta(1), epsilon(1). F(0) has three main subunits: a(1), b(2) and c(10-14). The alpha and beta chains form an alternating ring which encloses part of the gamma chain. F(1) is attached to F(0) by a central stalk formed by the gamma and epsilon chains, while a peripheral stalk is formed by the delta and b chains.

The protein resides in the cell inner membrane. F(1)F(0) ATP synthase produces ATP from ADP in the presence of a proton or sodium gradient. F-type ATPases consist of two structural domains, F(1) containing the extramembraneous catalytic core and F(0) containing the membrane proton channel, linked together by a central stalk and a peripheral stalk. During catalysis, ATP synthesis in the catalytic domain of F(1) is coupled via a rotary mechanism of the central stalk subunits to proton translocation. Its function is as follows. Component of the F(0) channel, it forms part of the peripheral stalk, linking F(1) to F(0). The chain is ATP synthase subunit b from Pelagibacter ubique (strain HTCC1062).